The chain runs to 100 residues: Urease subunit gamma (100 aa).

This sequence belongs to the urease gamma subunit family. As to quaternary structure, heterotrimer of UreA (gamma), UreB (beta) and UreC (alpha) subunits. Three heterotrimers associate to form the active enzyme.

Its subcellular location is the cytoplasm. It catalyses the reaction urea + 2 H2O + H(+) = hydrogencarbonate + 2 NH4(+). The protein operates within nitrogen metabolism; urea degradation; CO(2) and NH(3) from urea (urease route): step 1/1. This chain is Urease subunit gamma, found in Halalkalibacterium halodurans (strain ATCC BAA-125 / DSM 18197 / FERM 7344 / JCM 9153 / C-125) (Bacillus halodurans).